The sequence spans 255 residues: Type III pantothenate kinase (255 aa).

6-13 (DIGNTNTV) is a binding site for ATP. Residues Y100 and 107 to 110 (GADR) contribute to the substrate site. Catalysis depends on D109, which acts as the Proton acceptor. D129 is a K(+) binding site. ATP is bound at residue T132. T185 is a substrate binding site.

The protein belongs to the type III pantothenate kinase family. As to quaternary structure, homodimer. The cofactor is NH4(+). K(+) is required as a cofactor.

The protein resides in the cytoplasm. It catalyses the reaction (R)-pantothenate + ATP = (R)-4'-phosphopantothenate + ADP + H(+). It functions in the pathway cofactor biosynthesis; coenzyme A biosynthesis; CoA from (R)-pantothenate: step 1/5. Its function is as follows. Catalyzes the phosphorylation of pantothenate (Pan), the first step in CoA biosynthesis. The protein is Type III pantothenate kinase of Desulfosudis oleivorans (strain DSM 6200 / JCM 39069 / Hxd3) (Desulfococcus oleovorans).